The chain runs to 92 residues: Probable Fe(2+)-trafficking protein (92 aa).

Belongs to the Fe(2+)-trafficking protein family.

Its function is as follows. Could be a mediator in iron transactions between iron acquisition and iron-requiring processes, such as synthesis and/or repair of Fe-S clusters in biosynthetic enzymes. In Anaeromyxobacter sp. (strain Fw109-5), this protein is Probable Fe(2+)-trafficking protein.